Here is a 490-residue protein sequence, read N- to C-terminus: Sporulation-specific protein 1 (490 aa).

Residues 18 to 272 (YSIQSCIGRG…AYNLLSFEFV (255 aa)) form the Protein kinase domain. ATP contacts are provided by residues 24-32 (IGRGNFGDV) and lysine 47. The Proton acceptor role is filled by aspartate 141.

Belongs to the protein kinase superfamily. STE Ser/Thr protein kinase family. STE20 subfamily.

The protein localises to the nucleus. It is found in the cytoplasm. The catalysed reaction is L-seryl-[protein] + ATP = O-phospho-L-seryl-[protein] + ADP + H(+). It catalyses the reaction L-threonyl-[protein] + ATP = O-phospho-L-threonyl-[protein] + ADP + H(+). Serine/threonine protein kinase required for spore wall development. The protein is Sporulation-specific protein 1 (SPS1) of Saccharomyces cerevisiae (strain ATCC 204508 / S288c) (Baker's yeast).